We begin with the raw amino-acid sequence, 112 residues long: Small ribosomal subunit protein uS11c (112 aa).

The protein belongs to the universal ribosomal protein uS11 family. As to quaternary structure, part of the 30S ribosomal subunit.

The protein localises to the plastid. This is Small ribosomal subunit protein uS11c from Euglena longa (Euglenophycean alga).